The chain runs to 343 residues: N-acetyl-gamma-glutamyl-phosphate reductase (343 aa).

Residue C152 is part of the active site.

The protein belongs to the NAGSA dehydrogenase family. Type 1 subfamily.

Its subcellular location is the cytoplasm. The catalysed reaction is N-acetyl-L-glutamate 5-semialdehyde + phosphate + NADP(+) = N-acetyl-L-glutamyl 5-phosphate + NADPH + H(+). It functions in the pathway amino-acid biosynthesis; L-arginine biosynthesis; N(2)-acetyl-L-ornithine from L-glutamate: step 3/4. Its function is as follows. Catalyzes the NADPH-dependent reduction of N-acetyl-5-glutamyl phosphate to yield N-acetyl-L-glutamate 5-semialdehyde. The sequence is that of N-acetyl-gamma-glutamyl-phosphate reductase from Methanopyrus kandleri (strain AV19 / DSM 6324 / JCM 9639 / NBRC 100938).